We begin with the raw amino-acid sequence, 173 residues long: Ribosome maturation factor RimM (173 aa).

In terms of domain architecture, PRC barrel spans 90–169; that stretch reads EDEYFWFDIL…RIDTKGAQDI (80 aa).

This sequence belongs to the RimM family. As to quaternary structure, binds ribosomal protein uS19.

It is found in the cytoplasm. Functionally, an accessory protein needed during the final step in the assembly of 30S ribosomal subunit, possibly for assembly of the head region. Essential for efficient processing of 16S rRNA. May be needed both before and after RbfA during the maturation of 16S rRNA. It has affinity for free ribosomal 30S subunits but not for 70S ribosomes. The protein is Ribosome maturation factor RimM of Nitratiruptor sp. (strain SB155-2).